The primary structure comprises 585 residues: Glutamate decarboxylase 2 (585 aa).

Residues M1 to T25 form a disordered region. S3, S6, S10, and S13 each carry phosphoserine. Residues C30 and C45 are each lipidated (S-palmitoyl cysteine). Position 181–183 (Q181–S183) interacts with substrate. At K396 the chain carries N6-(pyridoxal phosphate)lysine. A substrate-binding site is contributed by R558.

It belongs to the group II decarboxylase family. As to quaternary structure, homodimer. The cofactor is pyridoxal 5'-phosphate. In terms of processing, phosphorylated; which does not affect kinetic parameters or subcellular location. Palmitoylated; which is required for presynaptic clustering.

The protein resides in the cytoplasm. It localises to the cytosol. The protein localises to the cytoplasmic vesicle. Its subcellular location is the presynaptic cell membrane. It is found in the golgi apparatus membrane. The catalysed reaction is L-glutamate + H(+) = 4-aminobutanoate + CO2. Catalyzes the production of GABA. The chain is Glutamate decarboxylase 2 (GAD2) from Canis lupus familiaris (Dog).